The following is a 102-amino-acid chain: MYAIIETGGKQLKVQEGQEIYIEKLDANEGDTVTFDKVLFVGGETVKIGNPTVEGATVTAKVQKHGRQKKIIVFKYKAKKNYRRKQGHRQPYTKVVIEKINA.

Belongs to the bacterial ribosomal protein bL21 family. In terms of assembly, part of the 50S ribosomal subunit. Contacts protein L20.

In terms of biological role, this protein binds to 23S rRNA in the presence of protein L20. The protein is Large ribosomal subunit protein bL21 of Geobacillus thermodenitrificans (strain NG80-2).